The primary structure comprises 256 residues: Alcohol dehydrogenase (256 aa).

NAD(+) is bound at residue 12-35; it reads FVAGLGGIGLDTSKELVKRDLKNL. Residue serine 140 participates in substrate binding. The Proton acceptor role is filled by tyrosine 153.

It belongs to the short-chain dehydrogenases/reductases (SDR) family. Homodimer.

The enzyme catalyses a primary alcohol + NAD(+) = an aldehyde + NADH + H(+). It catalyses the reaction a secondary alcohol + NAD(+) = a ketone + NADH + H(+). The polypeptide is Alcohol dehydrogenase (Adh) (Drosophila teissieri (Fruit fly)).